We begin with the raw amino-acid sequence, 241 residues long: Probable transcriptional regulatory protein H16_A0916 (241 aa).

This sequence belongs to the TACO1 family.

The protein localises to the cytoplasm. The chain is Probable transcriptional regulatory protein H16_A0916 from Cupriavidus necator (strain ATCC 17699 / DSM 428 / KCTC 22496 / NCIMB 10442 / H16 / Stanier 337) (Ralstonia eutropha).